The sequence spans 624 residues: Protein POLLEN DEFECTIVE IN GUIDANCE 1 (624 aa).

Residues 20–63 (SFENDDTSIRRSSSDPITGNVASESPRDYGKRKRSKKKKKKVNQ) are disordered. Polar residues predominate over residues 33 to 42 (SDPITGNVAS). Residues 49-61 (GKRKRSKKKKKKV) show a composition bias toward basic residues. The next 6 helical transmembrane spans lie at 263–283 (VLID…LTVM), 305–325 (ASEL…ILLG), 391–411 (FVSD…ILLA), 413–433 (AITL…LLVS), 545–565 (LTFV…PVYA), and 578–598 (LWMV…KVLI).

It belongs to the TAPT1 family. In terms of assembly, interacts with CRT3, but not with CRT1 or CNX. In terms of tissue distribution, expressed in inflorescences, siliques, roots and shoots. Expressed in early embryo, endosperm, mature pollen and pollen tubes, synergide cells and weakly in antipodal cells.

Its subcellular location is the membrane. It localises to the endoplasmic reticulum lumen. Probable component of the calreticulin 3 (CRT3) complex, acting probably as a co-chaperone involved in protein retention in the endoplasmic reticulum lumen. Required for micropylar pollen tube guidance. Plays an essential role in cell plate orientation or positioning in early embryo patterning. The chain is Protein POLLEN DEFECTIVE IN GUIDANCE 1 (POD1) from Arabidopsis thaliana (Mouse-ear cress).